A 237-amino-acid chain; its full sequence is Ribosomal RNA small subunit methyltransferase G (237 aa).

Residues Gly-78, Phe-83, 129 to 130 (AE), and Arg-148 contribute to the S-adenosyl-L-methionine site. The disordered stretch occupies residues 216 to 237 (SKKKETPNKYPRKAGTPNKKPL).

The protein belongs to the methyltransferase superfamily. RNA methyltransferase RsmG family.

It localises to the cytoplasm. In terms of biological role, specifically methylates the N7 position of a guanine in 16S rRNA. The sequence is that of Ribosomal RNA small subunit methyltransferase G from Streptococcus agalactiae serotype V (strain ATCC BAA-611 / 2603 V/R).